The primary structure comprises 368 residues: Putative zinc metalloprotease Cj1068 (368 aa).

His-36 is a Zn(2+) binding site. Residue Glu-37 is part of the active site. His-40 lines the Zn(2+) pocket. The next 3 membrane-spanning stretches (helical) occupy residues 112 to 134 (IYIL…IIIG), 291 to 313 (FTLL…LLPI), and 338 to 360 (TFEY…ATYN). The PDZ domain occupies 126-197 (AFFLYIIIGN…LKILINREGK (72 aa)).

It belongs to the peptidase M50B family. The cofactor is Zn(2+).

Its subcellular location is the cell inner membrane. The chain is Putative zinc metalloprotease Cj1068 from Campylobacter jejuni subsp. jejuni serotype O:2 (strain ATCC 700819 / NCTC 11168).